Here is a 624-residue protein sequence, read N- to C-terminus: Chaperone protein HtpG (624 aa).

Positions 1-336 (MKGQETRGFQ…SNDLPLNVSR (336 aa)) are a; substrate-binding. The b stretch occupies residues 337-552 (EILQDSTVTR…ADEMSTQMAK (216 aa)). A c region spans residues 553–624 (LFAAAGQSVP…IRRMNQLLVS (72 aa)).

It belongs to the heat shock protein 90 family. As to quaternary structure, homodimer.

Its subcellular location is the cytoplasm. Its function is as follows. Molecular chaperone. Has ATPase activity. The polypeptide is Chaperone protein HtpG (Salmonella paratyphi A (strain ATCC 9150 / SARB42)).